The sequence spans 315 residues: Nucleotide-binding protein PsycPRwf_2129 (315 aa).

Residue 29–36 (GRSGSGKT) coordinates ATP. 79-82 (DIRT) contacts GTP.

It belongs to the RapZ-like family.

Functionally, displays ATPase and GTPase activities. In Psychrobacter sp. (strain PRwf-1), this protein is Nucleotide-binding protein PsycPRwf_2129.